The sequence spans 231 residues: Octanoyltransferase (231 aa).

The 203-residue stretch at P29–P231 folds into the BPL/LPL catalytic domain. Substrate is bound by residues R68–H75, A164–G166, and G177–A179. C195 functions as the Acyl-thioester intermediate in the catalytic mechanism.

This sequence belongs to the LipB family.

It is found in the cytoplasm. The enzyme catalyses octanoyl-[ACP] + L-lysyl-[protein] = N(6)-octanoyl-L-lysyl-[protein] + holo-[ACP] + H(+). It functions in the pathway protein modification; protein lipoylation via endogenous pathway; protein N(6)-(lipoyl)lysine from octanoyl-[acyl-carrier-protein]: step 1/2. Its function is as follows. Catalyzes the transfer of endogenously produced octanoic acid from octanoyl-acyl-carrier-protein onto the lipoyl domains of lipoate-dependent enzymes. Lipoyl-ACP can also act as a substrate although octanoyl-ACP is likely to be the physiological substrate. The sequence is that of Octanoyltransferase from Verminephrobacter eiseniae (strain EF01-2).